The sequence spans 234 residues: NAD-dependent protein deacylase (234 aa).

In terms of domain architecture, Deacetylase sirtuin-type spans 1–234 (MKNLVVLTGA…ELKQLLIPAP (234 aa)). 9 to 28 (GAGMSAESGISTFRDAGGLW) is a binding site for NAD(+). Y53 and R56 together coordinate substrate. 86-89 (QNVD) is a binding site for NAD(+). H104 (proton acceptor) is an active-site residue. 175 to 177 (GTS) is a binding site for NAD(+).

The protein belongs to the sirtuin family. Class III subfamily.

Its subcellular location is the cytoplasm. It catalyses the reaction N(6)-acetyl-L-lysyl-[protein] + NAD(+) + H2O = 2''-O-acetyl-ADP-D-ribose + nicotinamide + L-lysyl-[protein]. The catalysed reaction is N(6)-succinyl-L-lysyl-[protein] + NAD(+) + H2O = 2''-O-succinyl-ADP-D-ribose + nicotinamide + L-lysyl-[protein]. Functionally, NAD-dependent lysine deacetylase and desuccinylase that specifically removes acetyl and succinyl groups on target proteins. Modulates the activities of several proteins which are inactive in their acylated form. The protein is NAD-dependent protein deacylase of Bacteroides thetaiotaomicron (strain ATCC 29148 / DSM 2079 / JCM 5827 / CCUG 10774 / NCTC 10582 / VPI-5482 / E50).